A 349-amino-acid chain; its full sequence is S-adenosylmethionine:tRNA ribosyltransferase-isomerase (349 aa).

Belongs to the QueA family. Monomer.

Its subcellular location is the cytoplasm. It carries out the reaction 7-aminomethyl-7-carbaguanosine(34) in tRNA + S-adenosyl-L-methionine = epoxyqueuosine(34) in tRNA + adenine + L-methionine + 2 H(+). The protein operates within tRNA modification; tRNA-queuosine biosynthesis. Functionally, transfers and isomerizes the ribose moiety from AdoMet to the 7-aminomethyl group of 7-deazaguanine (preQ1-tRNA) to give epoxyqueuosine (oQ-tRNA). This is S-adenosylmethionine:tRNA ribosyltransferase-isomerase from Pseudomonas putida (strain W619).